The primary structure comprises 246 residues: Small ribosomal subunit protein uS2 (246 aa).

The disordered stretch occupies residues 224–246; sequence AKQGEEEAEAAEETAPETETTTA. Acidic residues predominate over residues 229–239; the sequence is EEAEAAEETAP.

It belongs to the universal ribosomal protein uS2 family.

The sequence is that of Small ribosomal subunit protein uS2 from Bacillus velezensis (strain DSM 23117 / BGSC 10A6 / LMG 26770 / FZB42) (Bacillus amyloliquefaciens subsp. plantarum).